The primary structure comprises 936 residues: Calcium homeostasis endoplasmic reticulum protein (936 aa).

An N-acetylmethionine modification is found at Met1. One copy of the SURP motif repeat lies at Val15–Lys57. An N6-acetyllysine modification is found at Lys18. Positions Glu77 to Thr102 are disordered. Pro residues predominate over residues Ala81–Ala91. The CID domain occupies Glu149–Gly289. The segment at Leu328 to Asp646 is disordered. The span at Gln330–Gln355 shows a compositional bias: low complexity. Pro residues predominate over residues Thr363–Thr383. Residues Pro395–Gly405 are compositionally biased toward polar residues. Residues Pro488 to Gln500 show a composition bias toward low complexity. The segment covering Pro534–Pro550 has biased composition (pro residues). The span at His551–Phe560 shows a compositional bias: low complexity. Positions Met561–Glu572 are enriched in basic and acidic residues. A compositionally biased stretch (basic residues) spans Pro594–Pro603. Tyr723 carries the phosphotyrosine modification. The interval Arg731–Asp887 is disordered. A compositionally biased stretch (basic residues) spans Ser748–Ser758. Residues Ser759–Ser773 show a composition bias toward low complexity. Residues Ser774 to Ser824 are compositionally biased toward basic residues. Phosphoserine occurs at positions 822, 824, and 826. Thr828 carries the phosphothreonine modification. Phosphoserine is present on Ser837. Residues Glu850 to Asp900 enclose the G-patch domain. Lys853 is covalently cross-linked (Glycyl lysine isopeptide (Lys-Gly) (interchain with G-Cter in SUMO2)). Residues Ser864 and Ser866 each carry the phosphoserine modification. Residue Lys881 forms a Glycyl lysine isopeptide (Lys-Gly) (interchain with G-Cter in SUMO2) linkage. N6-acetyllysine is present on Lys888. Position 913 is a phosphoserine (Ser913).

It localises to the cytoplasm. Its subcellular location is the perinuclear region. The protein resides in the endoplasmic reticulum. Its function is as follows. Involved in calcium homeostasis, growth and proliferation. The chain is Calcium homeostasis endoplasmic reticulum protein from Mus musculus (Mouse).